The chain runs to 465 residues: Azaphilone cluster-specific transcription factor azaR (465 aa).

The segment covering 1 to 16 (MSDSRTTTTKNNTTNH) has biased composition (low complexity). A disordered region spans residues 1–25 (MSDSRTTTTKNNTTNHKTSRQGPGS). Residues 27-53 (CEECRRRKLRCDRQPQCQNCVDAGVYC) constitute a DNA-binding region (zn(2)-C6 fungal-type).

It localises to the nucleus. Functionally, transcription factor that regulates the expression of the gene cluster that mediates the biosynthesis of azaphilones, a class of fungal metabolites characterized by a highly oxygenated pyrano-quinone bicyclic core and exhibiting a broad range of bioactivities. The polypeptide is Azaphilone cluster-specific transcription factor azaR (Aspergillus niger (strain ATCC 1015 / CBS 113.46 / FGSC A1144 / LSHB Ac4 / NCTC 3858a / NRRL 328 / USDA 3528.7)).